A 196-amino-acid chain; its full sequence is Peroxisomal membrane protein 2 (196 aa).

The Cytoplasmic segment spans residues 1–30 (MAPAASKLRAEAGLGPLPRRALSQYLRLLR). A helical transmembrane segment spans residues 31-51 (LYPVLTKAATSGILSALGNFL). Residues 52–76 (AQLIEKKQKKENCSQKLDVSGPLRY) lie on the Peroxisomal side of the membrane. Residues 77 to 97 (AIYGFFFTGPLGHFFYLLMER) traverse the membrane as a helical segment. At 98-115 (WIPSEVPLAGIKRLLLDR) the chain is on the cytoplasmic side. The helical transmembrane segment at 116-136 (LLFAPAFLSLFFLVMNFLEGQ) threads the bilayer. At 137 to 174 (DTAAFAAKMKSGFWPALRMNWRVWTPVQFININYIPVQ) the chain is on the peroxisomal side. The chain crosses the membrane as a helical span at residues 175–196 (FRVLFANLVALFWYAYLASLGK).

It belongs to the peroxisomal membrane protein PXMP2/4 family. As to quaternary structure, interacts with PEX19 and SIVA1.

The protein resides in the peroxisome membrane. Functionally, seems to be involved in pore-forming activity and may contribute to the unspecific permeability of the peroxisomal membrane. The protein is Peroxisomal membrane protein 2 (PXMP2) of Bos taurus (Bovine).